Consider the following 259-residue polypeptide: Protein POLYCHOME (259 aa).

The interval 236-259 (KMKSTPSAKRAEREKRVRTLMSMR) is disordered.

Interacts with APC/C activators such as APC5, FZR2, FZR3, CDC20.1 and CDC20.5. As to expression, expressed mainly in actively dividing cells (e.g. central cylinder of the root tip, young leaves and vascular tissues).

Its subcellular location is the nucleus. Negative regulator of the anaphase-promoting complex/cyclosome (APC/C) ubiquitin ligase required for proper mitotic progression and cell fate determination; inhibits premature cell differentiation. Prevents DNA endoreplication by promoting the maintenance of the mitotic state by preferentially inhibiting APC/C(FZR) and triggering cyclins accumulation (e.g. CYCB1-1, CYCB1-2 and CYCA2-3) in a temporal manner. Required for megagametophyte and endosperm development. Counteracts the activity of CCS52A1 thus inhibiting the turnover of CYCA2-3. Confers immunity to bacterial pathogens (e.g. Pseudomonas syringae pv. tomato DC3000), which is associated with increased expression of disease resistance (R) genes. This chain is Protein POLYCHOME (PYM), found in Arabidopsis thaliana (Mouse-ear cress).